The following is a 286-amino-acid chain: Shikimate dehydrogenase (NADP(+)) (286 aa).

Shikimate contacts are provided by residues 22-24 (SRS) and T71. The active-site Proton acceptor is K75. E87 contributes to the NADP(+) binding site. Shikimate is bound by residues N96 and D111. Residues 136–140 (GAGGA), 160–165 (NRTAAR), and I225 each bind NADP(+). Y227 is a shikimate binding site. An NADP(+)-binding site is contributed by G248.

The protein belongs to the shikimate dehydrogenase family. Homodimer.

The catalysed reaction is shikimate + NADP(+) = 3-dehydroshikimate + NADPH + H(+). It participates in metabolic intermediate biosynthesis; chorismate biosynthesis; chorismate from D-erythrose 4-phosphate and phosphoenolpyruvate: step 4/7. Functionally, involved in the biosynthesis of the chorismate, which leads to the biosynthesis of aromatic amino acids. Catalyzes the reversible NADPH linked reduction of 3-dehydroshikimate (DHSA) to yield shikimate (SA). In Sinorhizobium fredii (strain NBRC 101917 / NGR234), this protein is Shikimate dehydrogenase (NADP(+)).